A 325-amino-acid chain; its full sequence is Tetraacyldisaccharide 4'-kinase (325 aa).

51–58 contributes to the ATP binding site; it reads VVGGAGKT.

This sequence belongs to the LpxK family.

It catalyses the reaction a lipid A disaccharide + ATP = a lipid IVA + ADP + H(+). It functions in the pathway glycolipid biosynthesis; lipid IV(A) biosynthesis; lipid IV(A) from (3R)-3-hydroxytetradecanoyl-[acyl-carrier-protein] and UDP-N-acetyl-alpha-D-glucosamine: step 6/6. Functionally, transfers the gamma-phosphate of ATP to the 4'-position of a tetraacyldisaccharide 1-phosphate intermediate (termed DS-1-P) to form tetraacyldisaccharide 1,4'-bis-phosphate (lipid IVA). The protein is Tetraacyldisaccharide 4'-kinase of Paramagnetospirillum magneticum (strain ATCC 700264 / AMB-1) (Magnetospirillum magneticum).